The chain runs to 308 residues: Transmembrane and ubiquitin-like domain-containing protein 1 (308 aa).

The helical transmembrane segment at 11–31 threads the bilayer; sequence VTVLFALVLFFMVLMLAWVST. Residues 39–162 are disordered; sequence THWIRPEPAQ…GLGDGTTAQS (124 aa). The segment covering 63-93 has biased composition (polar residues); it reads PSQTLTNADPNSETVDSSDSTQSSREFQNAG. The span at 103-115 shows a compositional bias: low complexity; that stretch reads SSSGSTVSTGGSV. A compositionally biased stretch (polar residues) spans 132-149; sequence PNFTVSSRDPQAGASSSL. The 74-residue stretch at 169–242 folds into the Ubiquitin-like domain; that stretch reads IHLRLKFLND…LHCHISQHAS (74 aa). The next 2 helical transmembrane spans lie at 253-273 and 283-303; these read VPLNVGNLLVPLLFLIVMLLW and FTGTATACLGGFTLLISAIAF.

Its subcellular location is the membrane. It localises to the cytoplasm. The protein resides in the nucleus. May contribute to the regulation of translation during cell-cycle progression. May contribute to the regulation of cell proliferation. The membrane form is involved in sterol-regulated ubiquitination and degradation of HMG-CoA reductase HMGCR. May be involved in centrosome assembly. This Xenopus laevis (African clawed frog) protein is Transmembrane and ubiquitin-like domain-containing protein 1 (tmub1).